The sequence spans 368 residues: Alanine racemase (368 aa).

Residue K40 is the Proton acceptor; specific for D-alanine of the active site. N6-(pyridoxal phosphate)lysine is present on K40. R134 provides a ligand contact to substrate. Residue Y263 is the Proton acceptor; specific for L-alanine of the active site. M310 is a binding site for substrate.

It belongs to the alanine racemase family. The cofactor is pyridoxal 5'-phosphate.

It carries out the reaction L-alanine = D-alanine. It functions in the pathway amino-acid biosynthesis; D-alanine biosynthesis; D-alanine from L-alanine: step 1/1. Its function is as follows. Catalyzes the interconversion of L-alanine and D-alanine. May also act on other amino acids. This is Alanine racemase (alr) from Listeria innocua serovar 6a (strain ATCC BAA-680 / CLIP 11262).